We begin with the raw amino-acid sequence, 426 residues long: Glutamate-1-semialdehyde 2,1-aminomutase (426 aa).

Position 265 is an N6-(pyridoxal phosphate)lysine (Lys265).

This sequence belongs to the class-III pyridoxal-phosphate-dependent aminotransferase family. HemL subfamily. As to quaternary structure, homodimer. Pyridoxal 5'-phosphate is required as a cofactor.

It is found in the cytoplasm. The catalysed reaction is (S)-4-amino-5-oxopentanoate = 5-aminolevulinate. Its pathway is porphyrin-containing compound metabolism; protoporphyrin-IX biosynthesis; 5-aminolevulinate from L-glutamyl-tRNA(Glu): step 2/2. This is Glutamate-1-semialdehyde 2,1-aminomutase from Salmonella agona (strain SL483).